A 309-amino-acid chain; its full sequence is tRNA dimethylallyltransferase (309 aa).

ATP is bound at residue 11–18; that stretch reads GPTASGKS. 13–18 contacts substrate; that stretch reads TASGKS. Interaction with substrate tRNA regions lie at residues 36-39 and 160-164; these read DSMQ and QRLLR.

This sequence belongs to the IPP transferase family. Monomer. The cofactor is Mg(2+).

It catalyses the reaction adenosine(37) in tRNA + dimethylallyl diphosphate = N(6)-dimethylallyladenosine(37) in tRNA + diphosphate. Its function is as follows. Catalyzes the transfer of a dimethylallyl group onto the adenine at position 37 in tRNAs that read codons beginning with uridine, leading to the formation of N6-(dimethylallyl)adenosine (i(6)A). In Caulobacter sp. (strain K31), this protein is tRNA dimethylallyltransferase.